The following is a 95-amino-acid chain: uncharacterized protein (95 aa).

The N-terminal stretch at 1–21 is a signal peptide; the sequence is MKVLSISLIFFALLLTGCSQV.

This is an uncharacterized protein from Archaeoglobus fulgidus (strain ATCC 49558 / DSM 4304 / JCM 9628 / NBRC 100126 / VC-16).